The primary structure comprises 420 residues: Glutamyl-tRNA reductase (420 aa).

Residues 49–52 (TCNR), S107, 112–114 (EPQ), and Q118 contribute to the substrate site. Residue C50 is the Nucleophile of the active site. 187 to 192 (GAGETI) provides a ligand contact to NADP(+).

It belongs to the glutamyl-tRNA reductase family. In terms of assembly, homodimer.

The catalysed reaction is (S)-4-amino-5-oxopentanoate + tRNA(Glu) + NADP(+) = L-glutamyl-tRNA(Glu) + NADPH + H(+). The protein operates within porphyrin-containing compound metabolism; protoporphyrin-IX biosynthesis; 5-aminolevulinate from L-glutamyl-tRNA(Glu): step 1/2. Functionally, catalyzes the NADPH-dependent reduction of glutamyl-tRNA(Glu) to glutamate 1-semialdehyde (GSA). This Methylococcus capsulatus (strain ATCC 33009 / NCIMB 11132 / Bath) protein is Glutamyl-tRNA reductase.